The following is a 157-amino-acid chain: Ribosome maturation factor RimP (157 aa).

The protein belongs to the RimP family.

The protein resides in the cytoplasm. Functionally, required for maturation of 30S ribosomal subunits. The polypeptide is Ribosome maturation factor RimP (Ligilactobacillus salivarius (strain UCC118) (Lactobacillus salivarius)).